The sequence spans 141 residues: Large ribosomal subunit protein uL11 (141 aa).

Belongs to the universal ribosomal protein uL11 family. In terms of assembly, part of the ribosomal stalk of the 50S ribosomal subunit. Interacts with L10 and the large rRNA to form the base of the stalk. L10 forms an elongated spine to which L12 dimers bind in a sequential fashion forming a multimeric L10(L12)X complex. Post-translationally, one or more lysine residues are methylated.

Its function is as follows. Forms part of the ribosomal stalk which helps the ribosome interact with GTP-bound translation factors. This is Large ribosomal subunit protein uL11 from Thermotoga sp. (strain RQ2).